The sequence spans 140 residues: Myelodysplastic syndrome 2 translocation-associated protein (140 aa).

In terms of tissue distribution, highly expressed in peripheral blood leukocytes, spleen, thymus, kidney, pancreas and lung.

The sequence is that of Myelodysplastic syndrome 2 translocation-associated protein (MDS2) from Homo sapiens (Human).